The sequence spans 254 residues: 3-deoxy-manno-octulosonate cytidylyltransferase (254 aa).

Belongs to the KdsB family.

The protein localises to the cytoplasm. The catalysed reaction is 3-deoxy-alpha-D-manno-oct-2-ulosonate + CTP = CMP-3-deoxy-beta-D-manno-octulosonate + diphosphate. It functions in the pathway nucleotide-sugar biosynthesis; CMP-3-deoxy-D-manno-octulosonate biosynthesis; CMP-3-deoxy-D-manno-octulosonate from 3-deoxy-D-manno-octulosonate and CTP: step 1/1. Its pathway is bacterial outer membrane biogenesis; lipopolysaccharide biosynthesis. Its function is as follows. Activates KDO (a required 8-carbon sugar) for incorporation into bacterial lipopolysaccharide in Gram-negative bacteria. The sequence is that of 3-deoxy-manno-octulosonate cytidylyltransferase from Pseudomonas aeruginosa (strain UCBPP-PA14).